The following is a 925-amino-acid chain: Protein translocase subunit SecA (925 aa).

Residues glutamine 87, 105–109, and aspartate 515 contribute to the ATP site; that span reads GEGKT. The Zn(2+) site is built by cysteine 909, cysteine 911, cysteine 920, and histidine 921.

This sequence belongs to the SecA family. As to quaternary structure, monomer and homodimer. Part of the essential Sec protein translocation apparatus which comprises SecA, SecYEG and auxiliary proteins SecDF-YajC and YidC. Zn(2+) serves as cofactor.

Its subcellular location is the cell inner membrane. The protein localises to the cytoplasm. It carries out the reaction ATP + H2O + cellular proteinSide 1 = ADP + phosphate + cellular proteinSide 2.. Its function is as follows. Part of the Sec protein translocase complex. Interacts with the SecYEG preprotein conducting channel. Has a central role in coupling the hydrolysis of ATP to the transfer of proteins into and across the cell membrane, serving both as a receptor for the preprotein-SecB complex and as an ATP-driven molecular motor driving the stepwise translocation of polypeptide chains across the membrane. The polypeptide is Protein translocase subunit SecA (Cupriavidus necator (strain ATCC 17699 / DSM 428 / KCTC 22496 / NCIMB 10442 / H16 / Stanier 337) (Ralstonia eutropha)).